Consider the following 216-residue polypeptide: Probable GTP-binding protein EngB (216 aa).

The region spanning 26 to 210 (PMATIIFAGR…KNRIFEVIRE (185 aa)) is the EngB-type G domain. Residues 34 to 41 (GRSNVGKS), 59 to 63 (GVTRK), 76 to 79 (DMPG), 156 to 159 (NKLD), and 189 to 191 (ISA) each bind GTP. Mg(2+) is bound by residues Ser-41 and Thr-61.

Belongs to the TRAFAC class TrmE-Era-EngA-EngB-Septin-like GTPase superfamily. EngB GTPase family. It depends on Mg(2+) as a cofactor.

In terms of biological role, necessary for normal cell division and for the maintenance of normal septation. The sequence is that of Probable GTP-binding protein EngB from Pyrococcus horikoshii (strain ATCC 700860 / DSM 12428 / JCM 9974 / NBRC 100139 / OT-3).